Consider the following 429-residue polypeptide: Formate-dependent phosphoribosylglycinamide formyltransferase (429 aa).

N(1)-(5-phospho-beta-D-ribosyl)glycinamide-binding positions include Glu-26–Leu-27 and Glu-86. ATP-binding positions include Arg-118, Lys-159, Glu-199–Ile-202, and Glu-207. Positions Glu-123–Leu-319 constitute an ATP-grasp domain. 2 residues coordinate Mg(2+): Glu-276 and Glu-288. N(1)-(5-phospho-beta-D-ribosyl)glycinamide is bound by residues Asp-295, Lys-375, and Arg-382–Arg-383.

The protein belongs to the PurK/PurT family. Homodimer.

The enzyme catalyses N(1)-(5-phospho-beta-D-ribosyl)glycinamide + formate + ATP = N(2)-formyl-N(1)-(5-phospho-beta-D-ribosyl)glycinamide + ADP + phosphate + H(+). Its pathway is purine metabolism; IMP biosynthesis via de novo pathway; N(2)-formyl-N(1)-(5-phospho-D-ribosyl)glycinamide from N(1)-(5-phospho-D-ribosyl)glycinamide (formate route): step 1/1. Involved in the de novo purine biosynthesis. Catalyzes the transfer of formate to 5-phospho-ribosyl-glycinamide (GAR), producing 5-phospho-ribosyl-N-formylglycinamide (FGAR). Formate is provided by PurU via hydrolysis of 10-formyl-tetrahydrofolate. The chain is Formate-dependent phosphoribosylglycinamide formyltransferase from Thermococcus kodakarensis (strain ATCC BAA-918 / JCM 12380 / KOD1) (Pyrococcus kodakaraensis (strain KOD1)).